The sequence spans 75 residues: Sec-independent protein translocase protein TatA (75 aa).

The helical transmembrane segment at 1–21 (MGGFSIWHWLIVLVIVLLVFG) threads the bilayer. Residues 41–75 (KGMHDDDKPAGKLGDDSRTAEQAREAQAERDRDAR) are disordered.

It belongs to the TatA/E family. In terms of assembly, the Tat system comprises two distinct complexes: a TatABC complex, containing multiple copies of TatA, TatB and TatC subunits, and a separate TatA complex, containing only TatA subunits. Substrates initially bind to the TatABC complex, which probably triggers association of the separate TatA complex to form the active translocon.

It is found in the cell inner membrane. Functionally, part of the twin-arginine translocation (Tat) system that transports large folded proteins containing a characteristic twin-arginine motif in their signal peptide across membranes. TatA could form the protein-conducting channel of the Tat system. This chain is Sec-independent protein translocase protein TatA, found in Xanthomonas axonopodis pv. citri (strain 306).